The sequence spans 440 residues: UDP-N-acetylmuramoylalanine--D-glutamate ligase (440 aa).

ATP is bound at residue 115 to 121; it reads GSNGKST.

This sequence belongs to the MurCDEF family.

The protein resides in the cytoplasm. It carries out the reaction UDP-N-acetyl-alpha-D-muramoyl-L-alanine + D-glutamate + ATP = UDP-N-acetyl-alpha-D-muramoyl-L-alanyl-D-glutamate + ADP + phosphate + H(+). Its pathway is cell wall biogenesis; peptidoglycan biosynthesis. Functionally, cell wall formation. Catalyzes the addition of glutamate to the nucleotide precursor UDP-N-acetylmuramoyl-L-alanine (UMA). This is UDP-N-acetylmuramoylalanine--D-glutamate ligase from Vibrio cholerae serotype O1 (strain ATCC 39315 / El Tor Inaba N16961).